A 347-amino-acid chain; its full sequence is tRNA N6-adenosine threonylcarbamoyltransferase (347 aa).

2 residues coordinate Fe cation: His111 and His115. Substrate is bound by residues 134–138, Asp167, Gly180, and Asn276; that span reads LVSGG. Asp304 provides a ligand contact to Fe cation.

The protein belongs to the KAE1 / TsaD family. It depends on Fe(2+) as a cofactor.

The protein localises to the cytoplasm. It carries out the reaction L-threonylcarbamoyladenylate + adenosine(37) in tRNA = N(6)-L-threonylcarbamoyladenosine(37) in tRNA + AMP + H(+). Functionally, required for the formation of a threonylcarbamoyl group on adenosine at position 37 (t(6)A37) in tRNAs that read codons beginning with adenine. Is involved in the transfer of the threonylcarbamoyl moiety of threonylcarbamoyl-AMP (TC-AMP) to the N6 group of A37, together with TsaE and TsaB. TsaD likely plays a direct catalytic role in this reaction. This chain is tRNA N6-adenosine threonylcarbamoyltransferase, found in Nitrosospira multiformis (strain ATCC 25196 / NCIMB 11849 / C 71).